The following is a 98-amino-acid chain: MNQERLYKVLLGPVISEKAAMAAEIANQAVFKVVSDASKSEIKAAVEKLFNVSVEGVRVLNVKGKTKRTRYGMGRRSDWKKAYVTLAEGSEIDFESGE.

The protein belongs to the universal ribosomal protein uL23 family. Part of the 50S ribosomal subunit. Contacts protein L29, and trigger factor when it is bound to the ribosome.

Its function is as follows. One of the early assembly proteins it binds 23S rRNA. One of the proteins that surrounds the polypeptide exit tunnel on the outside of the ribosome. Forms the main docking site for trigger factor binding to the ribosome. The polypeptide is Large ribosomal subunit protein uL23 (Teredinibacter turnerae (strain ATCC 39867 / T7901)).